Reading from the N-terminus, the 346-residue chain is Short-chain dehydrogenase/reductase bet4 (346 aa).

The interval 1–35 (MTPAKAPSHAKKPEAGSQPISSMWTQMFPPKPTYT) is disordered. Val56, Lys80, Asp105, and Asn132 together coordinate NADP(+). Residue Ser191 is the Proton donor of the active site. NADP(+) contacts are provided by Tyr222 and Lys226. Residue Tyr222 is the Proton acceptor of the active site. The active-site Lowers pKa of active site Tyr is the Lys226.

It belongs to the short-chain dehydrogenases/reductases (SDR) family.

The catalysed reaction is dehydroprobetaenone I + AH2 = probetaenone I + A. Its pathway is mycotoxin biosynthesis. Functionally, short-chain dehydrogenase/reductase; part of the gene cluster that mediates the biosynthesis of betaenones, phytotoxic polyketides involved in leaf spot disease in sugar beets. The first step of the pathway is the synthesis of dehydroprobetaenone I by the polyketide synthase bet1 and the enoyl reductase bet3 via condensation of one acetyl-CoA starter unit with 7 malonyl-CoA units and 5 methylations. The C-terminal reductase (R) domain of bet1 catalyzes the reductive release of the polyketide chain. Because bet1 lacks a designated enoylreductase (ER) domain, the required activity is provided the enoyl reductase bet3. The short-chain dehydrogenase/reductase bet4 then catalyzes reduction of dehydroprobetaenone I to probetaenone I. The cytochrome P450 monooxygenase bet2 catalyzes successive epoxidation, oxidation (resulting from epoxide opening) and hydroxylation to install a tertiary alcohol in the decaline ring to yield betaenone C from dehydroprobetaenone I and betaenone B from probetaenone I. The FAD-linked oxidoreductase (orf1) is probably responsible for the conversion of betaenone C to betaenone A via an intramolecular aldol reaction between C-1 and C-17 to form the bridged tricyclic system in betaenone A. This chain is Short-chain dehydrogenase/reductase bet4, found in Neocamarosporium betae (Beet black rot fungus).